A 63-amino-acid polypeptide reads, in one-letter code: Beta-defensin 4 (63 aa).

A signal peptide spans 1–22 (MRLHHLLLAVLFLVLSAGSGFT). At Gln-23 the chain carries Pyrrolidone carboxylic acid. Intrachain disulfides connect Cys-31–Cys-60, Cys-38–Cys-53, and Cys-43–Cys-61.

The protein belongs to the beta-defensin family. Neutrophilic granules.

The protein localises to the secreted. Functionally, has bactericidal activity. Active against E.coli ML35 and S.aureus 502A. The protein is Beta-defensin 4 (DEFB4) of Bos taurus (Bovine).